The chain runs to 184 residues: Gastrokine-2 (184 aa).

An N-terminal signal peptide occupies residues 1–20 (MKPLVAFLVVLSIFGIQSQA). Residues 54-151 (HSGSCSSTTI…LCKHMPLYEG (98 aa)) enclose the BRICHOS domain. A disulfide bridge connects residues Cys81 and Cys143.

Heterodimer with TFF1; disulfide linked. Interacts with TFF2. As to expression, stomach foveolar epithelium and duodenal Brunner's glands.

It is found in the secreted. The protein resides in the golgi apparatus. The polypeptide is Gastrokine-2 (Gkn2) (Mus musculus (Mouse)).